We begin with the raw amino-acid sequence, 664 residues long: DNA mismatch repair protein MutL (664 aa).

Belongs to the DNA mismatch repair MutL/HexB family.

Its function is as follows. This protein is involved in the repair of mismatches in DNA. It is required for dam-dependent methyl-directed DNA mismatch repair. May act as a 'molecular matchmaker', a protein that promotes the formation of a stable complex between two or more DNA-binding proteins in an ATP-dependent manner without itself being part of a final effector complex. The sequence is that of DNA mismatch repair protein MutL from Clostridium beijerinckii (strain ATCC 51743 / NCIMB 8052) (Clostridium acetobutylicum).